The following is an 84-amino-acid chain: Small ribosomal subunit protein uS17 (84 aa).

Belongs to the universal ribosomal protein uS17 family. In terms of assembly, part of the 30S ribosomal subunit.

In terms of biological role, one of the primary rRNA binding proteins, it binds specifically to the 5'-end of 16S ribosomal RNA. The sequence is that of Small ribosomal subunit protein uS17 from Vibrio atlanticus (strain LGP32) (Vibrio splendidus (strain Mel32)).